Reading from the N-terminus, the 287-residue chain is Probable prolyl 4-hydroxylase 3 (287 aa).

Over Met-1–Thr-16 the chain is Cytoplasmic. A helical; Signal-anchor for type II membrane protein membrane pass occupies residues Leu-17 to Phe-37. The Lumenal segment spans residues Gly-38–Ile-287. The Fe2OG dioxygenase domain maps to His-159–Val-282. Fe cation contacts are provided by His-177 and Asp-179. Asn-218 carries N-linked (GlcNAc...) asparagine glycosylation. Position 263 (His-263) interacts with Fe cation. Lys-273 provides a ligand contact to 2-oxoglutarate.

Belongs to the P4HA family. It depends on Fe(2+) as a cofactor. L-ascorbate is required as a cofactor.

Its subcellular location is the endoplasmic reticulum membrane. The catalysed reaction is L-prolyl-[collagen] + 2-oxoglutarate + O2 = trans-4-hydroxy-L-prolyl-[collagen] + succinate + CO2. Catalyzes the post-translational formation of 4-hydroxyproline in -Xaa-Pro-Gly- sequences in proline-rich peptide sequences of plant glycoproteins and other proteins. Hydroxyprolines are important constituent of many plant cell wall glycoproteins such as extensins, hydroxyproline-rich glycoproteins, lectins and arabinogalactan proteins. This chain is Probable prolyl 4-hydroxylase 3, found in Arabidopsis thaliana (Mouse-ear cress).